Reading from the N-terminus, the 179-residue chain is Apolipophorin-3b (179 aa).

Positions 1–16 (MNTLLAVLMLAVAAQA) are cleaved as a signal peptide. 12 repeats span residues 30–40 (VQQLNHTIVNA), 41–52 (AHELHETLGLPT), 53–60 (PDEALNLL), 61–78 (TEQA…TTSL), 79–89 (KQEAEKHQGSV), 90–99 (AEQLNRFARN), 100–113 (LNNS…SAQP), 114–127 (ADQL…LTNV), 128–140 (GHQW…RPSV), 141–151 (AQEAWAPVQSA), 152–165 (LQEA…AAAN), and 166–179 (LQNS…KPAN). The N-linked (GlcNAc...) asparagine glycan is linked to asparagine 34. Asparagine 101 is a glycosylation site (N-linked (GlcNAc...) asparagine). The disordered stretch occupies residues 152 to 179 (LQEAAEKTKEAAANLQNSIQSAVQKPAN). The segment covering 165–179 (NLQNSIQSAVQKPAN) has biased composition (polar residues).

It belongs to the insect apolipophorin-3 family. In terms of assembly, equilibrium between a soluble monomer and a bound lipoprotein form. Apolipophorin-3 associates with lipophorin during lipid loading until each particle contains 14 molecules of apolipophorin-3 in L.migratoria (5 molecules of apolipophorin-3a and 9 of apolipophorin-3b). In terms of tissue distribution, hemolymph.

Its subcellular location is the secreted. Assists in the loading of diacylglycerol, generated from triacylglycerol stores in the fat body through the action of adipokinetic hormone, into lipophorin, the hemolymph lipoprotein. It increases the lipid carrying capacity of lipophorin by covering the expanding hydrophobic surface resulting from diacylglycerol uptake. It thus plays a critical role in the transport of lipids during flight in several species of insects. The chain is Apolipophorin-3b from Locusta migratoria (Migratory locust).